The sequence spans 305 residues: Glycine betaine-binding protein YehZ (305 aa).

A signal peptide spans Met-1 to Ala-23.

Belongs to the OsmX family. In terms of assembly, the complex is composed of two ATP-binding proteins (YehX), two transmembrane proteins (YehW and YehY) and a solute-binding protein (YehZ).

The protein resides in the periplasm. Part of an ABC transporter complex involved in low-affinity glycine betaine uptake. Binds glycine betaine with low affinity. The sequence is that of Glycine betaine-binding protein YehZ (yehZ) from Escherichia coli (strain K12).